A 378-amino-acid chain; its full sequence is P2X receptor A (378 aa).

Topologically, residues 1 to 27 (MGFSFDWDDIFQYSTVKIVRIRDRRLG) are cytoplasmic. The helical transmembrane segment at 28–48 (ILHLSFLVGIVAYIVVYSAII) threads the bilayer. Topologically, residues 49-307 (KKGYLFTEVP…IQTGTIGSFH (259 aa)) are lumenal. Positions 290-303 (RHGIRVIFIQTGTI) are pore-forming motif. Residues 308–328 (FQTLLLTLVSGLGLLAVATTV) form a helical membrane-spanning segment. Residues 329–378 (VDQLAIRLLPQRKSYSSLKFQVTESMSNPMKKRITTDEGEDVLYTRIEGL) are Cytoplasmic-facing.

The protein belongs to the P2X receptor family.

Its subcellular location is the contractile vacuole membrane. Its function is as follows. P2X receptors are ATP-gated ion channels that play a role in intracellular calcium signaling. Not required for the purinergic response to extracellular nucleotides. Inward currents evoked by intracellular ATP and ATP analogs. Exclusively selective for ATP over other nucleotides. Insensitive to P2 receptor antagonists PPADS, suramin and 2',3'-O-(2,4,6-trinitrophenyl)-ATP but inhibited by nanomolar concentrations of copper and sodium ion. More permeable to ammonium than either sodium or potassium ions and less permeable to choline. It has been reported that p2xA is not essential for osmoregulation, however this information is in contradiction with another source which indicates that p2xA is required for osmoregulation. Found to be permeable to chloride ions. Inhibited by copper and sodium ions. The polypeptide is P2X receptor A (p2xA) (Dictyostelium discoideum (Social amoeba)).